The chain runs to 41 residues: Histone H2B.3, sperm (41 aa).

The disordered stretch occupies residues Met1–Lys41. Short sequence motifs (SPKK motif) lie at residues Ser4–Lys7, Ser9–Lys12, Ser14–Lys17, and Ser19–Arg22. Basic residues predominate over residues Ser9–Lys41. 2 positions are modified to phosphoserine: Ser14 and Ser19.

This sequence belongs to the histone H2B family. The nucleosome is a histone octamer containing two molecules each of H2A, H2B, H3 and H4 assembled in one H3-H4 heterotetramer and two H2A-H2B heterodimers. The octamer wraps approximately 147 bp of DNA. In terms of processing, monoubiquitination gives a specific tag for epigenetic transcriptional activation and is also prerequisite for histone H3 'Lys-4' and 'Lys-79' methylation. Phosphorylated on SPKK motifs 3 and 4; which may regulate DNA binding. Dephosphorylated during maturation of spermatids to mature sperm and rephosphorylated at fertilization.

It localises to the nucleus. The protein localises to the chromosome. Its function is as follows. Core component of nucleosome. Nucleosomes wrap and compact DNA into chromatin, limiting DNA accessibility to the cellular machineries which require DNA as a template. Histones thereby play a central role in transcription regulation, DNA repair, DNA replication and chromosomal stability. DNA accessibility is regulated via a complex set of post-translational modifications of histones, also called histone code, and nucleosome remodeling. This is Histone H2B.3, sperm from Echinus esculentus (Sea urchin).